A 261-amino-acid chain; its full sequence is Ribonuclease PH (261 aa).

Residues Arg87 and 125-127 each bind phosphate; that span reads GTR.

Belongs to the RNase PH family. As to quaternary structure, homohexameric ring arranged as a trimer of dimers.

It catalyses the reaction tRNA(n+1) + phosphate = tRNA(n) + a ribonucleoside 5'-diphosphate. Its function is as follows. Phosphorolytic 3'-5' exoribonuclease that plays an important role in tRNA 3'-end maturation. Removes nucleotide residues following the 3'-CCA terminus of tRNAs; can also add nucleotides to the ends of RNA molecules by using nucleoside diphosphates as substrates, but this may not be physiologically important. Probably plays a role in initiation of 16S rRNA degradation (leading to ribosome degradation) during starvation. In Thermoanaerobacter pseudethanolicus (strain ATCC 33223 / 39E) (Clostridium thermohydrosulfuricum), this protein is Ribonuclease PH.